Here is a 47-residue protein sequence, read N- to C-terminus: PhoP/PhoQ regulator MgrB (47 aa).

A helical membrane pass occupies residues 6–26; it reads WVALVVVVLACLLLWAQVFNM.

It belongs to the MgrB family. As to quaternary structure, may form homooligomers. Probably interacts with the periplasmic domain of PhoQ.

It localises to the cell inner membrane. Functionally, phoP-regulated transcription is redox-sensitive, being activated when the periplasm becomes more reducing. MgrB acts between DsbA/DsbB and PhoP/PhoQ in this pathway. Represses PhoP/PhoQ signaling, possibly by binding to the periplasmic domain of PhoQ, altering its activity and that of downstream effector PhoP. The chain is PhoP/PhoQ regulator MgrB from Escherichia coli O1:K1 / APEC.